The chain runs to 359 residues: Gene 58 protein (359 aa).

11 helical membrane-spanning segments follow: residues 12-32, 45-65, 75-95, 103-123, 132-152, 154-174, 220-240, 246-266, 271-289, 296-318, and 330-350; these read TMAA…CFLF, VDEL…FFCF, YLDL…ICLQ, YLPI…PVTF, YANA…YLLL, FGSV…IAGL, LCVV…AGVY, VLKT…GMGY, ATFV…VFVL, SVLF…TIML, and IVLS…NVLY.

Belongs to the herpesviridae BMRF2 family.

The protein resides in the host membrane. The polypeptide is Gene 58 protein (58) (Equine herpesvirus 2 (strain 86/87) (EHV-2)).